The sequence spans 430 residues: 3-phosphoshikimate 1-carboxyvinyltransferase (430 aa).

Residues K33, S34, and R38 each coordinate 3-phosphoshikimate. A phosphoenolpyruvate-binding site is contributed by K33. G101 and R129 together coordinate phosphoenolpyruvate. The 3-phosphoshikimate site is built by S172, S173, Q174, S201, E319, and H346. Q174 serves as a coordination point for phosphoenolpyruvate. The Proton acceptor role is filled by E319. Phosphoenolpyruvate contacts are provided by R350, R391, and K416.

The protein belongs to the EPSP synthase family. In terms of assembly, monomer.

It is found in the cytoplasm. The enzyme catalyses 3-phosphoshikimate + phosphoenolpyruvate = 5-O-(1-carboxyvinyl)-3-phosphoshikimate + phosphate. It participates in metabolic intermediate biosynthesis; chorismate biosynthesis; chorismate from D-erythrose 4-phosphate and phosphoenolpyruvate: step 6/7. In terms of biological role, catalyzes the transfer of the enolpyruvyl moiety of phosphoenolpyruvate (PEP) to the 5-hydroxyl of shikimate-3-phosphate (S3P) to produce enolpyruvyl shikimate-3-phosphate and inorganic phosphate. This chain is 3-phosphoshikimate 1-carboxyvinyltransferase, found in Corynebacterium glutamicum (strain R).